Consider the following 387-residue polypeptide: Gibberellic acid methyltransferase 2 (387 aa).

Y33 contacts S-adenosyl-L-homocysteine. Q40 serves as a coordination point for gibberellin A4. Positions 74, 79, 113, 114, 146, and 147 each coordinate S-adenosyl-L-homocysteine. Residues H167 and W168 each coordinate gibberellin A4. Mg(2+)-binding residues include N185, R275, D276, F278, and N279.

This sequence belongs to the methyltransferase superfamily. Type-7 methyltransferase family. SABATH subfamily. Requires Mg(2+) as cofactor. As to expression, expressed in siliques and germinating seeds. Not detected in leaves, stems, flowers and roots.

It carries out the reaction gibberellin A4 + S-adenosyl-L-methionine = O-methyl gibberellin A4 + S-adenosyl-L-homocysteine. With respect to regulation, down-regulated by Zn(2+), Cu(2+) and Fe(3+). No effect of K(+), NH(4+), Na(+), Ca(2+), Mg(2+), Mn(2+) and Fe(2+). Functionally, methylates the carboxyl group of several gibberellins (GAs). Substrate preference is GA4 &gt; GA34 &gt; GA9 &gt; GA3 &gt; GA1 &gt; GA51 &gt; GA20. No activity with diterpenes abietic acid and ent-kaurenoic acid. This Arabidopsis thaliana (Mouse-ear cress) protein is Gibberellic acid methyltransferase 2 (GAMT2).